A 100-amino-acid chain; its full sequence is Small ribosomal subunit protein uS14c (100 aa).

This sequence belongs to the universal ribosomal protein uS14 family. As to quaternary structure, part of the 30S ribosomal subunit.

It is found in the plastid. The protein localises to the chloroplast. In terms of biological role, binds 16S rRNA, required for the assembly of 30S particles. This Cicer arietinum (Chickpea) protein is Small ribosomal subunit protein uS14c.